Consider the following 363-residue polypeptide: Outer membrane porin C (363 aa).

An N-terminal signal peptide occupies residues 1–21 (MKVKVLSLLVPALLVAGAANA). Residues 174-187 (NGSASGEDQTNNGR) are compositionally biased toward polar residues. Residues 174 to 195 (NGSASGEDQTNNGRTELRQNGD) form a disordered region.

The protein belongs to the Gram-negative porin family. As to quaternary structure, homotrimer. Probably forms mixed heterotrimers with OmpF; other mixed heterotrimers are also probable.

It is found in the cell outer membrane. Its function is as follows. Forms pores that allow passive diffusion of small molecules across the outer membrane. Functionally, (Microbial infection) Binds CdiA-EC536, probably acts as the outer membrane receptor for toxin CdiA-EC536 with OmpF. In Enterobacter cloacae subsp. cloacae (strain ATCC 13047 / DSM 30054 / NBRC 13535 / NCTC 10005 / WDCM 00083 / NCDC 279-56), this protein is Outer membrane porin C (ompC).